The sequence spans 450 residues: 23S rRNA (uracil(1939)-C(5))-methyltransferase RlmD (450 aa).

Residues 1-22 form a disordered region; that stretch reads MAKHDRGLRFQPAGGSRAPQIP. The region spanning 20 to 78 is the TRAM domain; it reads QIPVGKKQRLTIQRLANDGRGIAFVEGRTWFVSGALAGEEVEARVLGSHGKVVEARAER. Residues cysteine 91, cysteine 97, cysteine 100, and cysteine 179 each coordinate [4Fe-4S] cluster. Residues glutamine 283, phenylalanine 312, asparagine 317, glutamate 333, aspartate 360, and aspartate 381 each contribute to the S-adenosyl-L-methionine site. The active-site Nucleophile is the cysteine 407.

The protein belongs to the class I-like SAM-binding methyltransferase superfamily. RNA M5U methyltransferase family. RlmD subfamily.

The enzyme catalyses uridine(1939) in 23S rRNA + S-adenosyl-L-methionine = 5-methyluridine(1939) in 23S rRNA + S-adenosyl-L-homocysteine + H(+). In terms of biological role, catalyzes the formation of 5-methyl-uridine at position 1939 (m5U1939) in 23S rRNA. This chain is 23S rRNA (uracil(1939)-C(5))-methyltransferase RlmD, found in Pseudomonas fluorescens (strain ATCC BAA-477 / NRRL B-23932 / Pf-5).